The chain runs to 879 residues: Alanine--tRNA ligase (879 aa).

Zn(2+)-binding residues include His-566, His-570, Cys-668, and His-672.

Belongs to the class-II aminoacyl-tRNA synthetase family. Zn(2+) serves as cofactor.

It is found in the cytoplasm. The catalysed reaction is tRNA(Ala) + L-alanine + ATP = L-alanyl-tRNA(Ala) + AMP + diphosphate. Catalyzes the attachment of alanine to tRNA(Ala) in a two-step reaction: alanine is first activated by ATP to form Ala-AMP and then transferred to the acceptor end of tRNA(Ala). Also edits incorrectly charged Ser-tRNA(Ala) and Gly-tRNA(Ala) via its editing domain. In Clostridium botulinum (strain Alaska E43 / Type E3), this protein is Alanine--tRNA ligase.